The sequence spans 271 residues: NADH-quinone oxidoreductase subunit B (271 aa).

Residues Cys37, Cys38, Cys103, and Cys132 each coordinate [4Fe-4S] cluster. Residues 227 to 271 (LAPPSVFGRAKRIPVDPKPSDEARAHGPGPTTESIGDVDGPDRGI) are disordered. Positions 239–251 (IPVDPKPSDEARA) are enriched in basic and acidic residues.

It belongs to the complex I 20 kDa subunit family. In terms of assembly, NDH-1 is composed of 14 different subunits. Subunits NuoB, C, D, E, F, and G constitute the peripheral sector of the complex. [4Fe-4S] cluster serves as cofactor.

Its subcellular location is the cell membrane. It catalyses the reaction a quinone + NADH + 5 H(+)(in) = a quinol + NAD(+) + 4 H(+)(out). NDH-1 shuttles electrons from NADH, via FMN and iron-sulfur (Fe-S) centers, to quinones in the respiratory chain. The immediate electron acceptor for the enzyme in this species is believed to be a menaquinone. Couples the redox reaction to proton translocation (for every two electrons transferred, four hydrogen ions are translocated across the cytoplasmic membrane), and thus conserves the redox energy in a proton gradient. This chain is NADH-quinone oxidoreductase subunit B, found in Frankia casuarinae (strain DSM 45818 / CECT 9043 / HFP020203 / CcI3).